The chain runs to 148 residues: Protein SprT-like (148 aa).

The region spanning 6–147 is the SprT-like domain; it reads LQQLVATISM…CGRCQGPIKL (142 aa). His-67 is a Zn(2+) binding site. The active site involves Glu-68. His-71 is a Zn(2+) binding site.

The protein belongs to the SprT family. Zn(2+) serves as cofactor.

It localises to the cytoplasm. The polypeptide is Protein SprT-like (Lactiplantibacillus plantarum (strain ATCC BAA-793 / NCIMB 8826 / WCFS1) (Lactobacillus plantarum)).